Here is a 66-residue protein sequence, read N- to C-terminus: Large ribosomal subunit protein bL33c (66 aa).

It belongs to the bacterial ribosomal protein bL33 family.

The protein resides in the plastid. The protein localises to the chloroplast. In Manihot esculenta (Cassava), this protein is Large ribosomal subunit protein bL33c.